Consider the following 1980-residue polypeptide: Unconventional myosin-IXb (1980 aa).

An N-acetylserine modification is found at Ser2. Residues 15–114 enclose the Ras-associating domain; it reads ATFHLHIYPQ…YYFLLQERNA (100 aa). Residues 146–954 enclose the Myosin motor domain; the sequence is ADFDDLCNLP…ERQALQERLH (809 aa). Residue 239-246 coordinates ATP; that stretch reads GESGSGKT. A disordered region spans residues 715 to 736; sequence GVSSPVTRSHVEELPRGANTPS. Phosphoserine is present on residues Ser717 and Ser718. An actin-binding region spans residues 845-856; the sequence is KAEPFFIRCIRS. The segment at 941 to 1045 is neck or regulatory domain; that stretch reads LKETERQALQ…CRGHLQRRSF (105 aa). IQ domains are found at residues 958 to 978, 981 to 1001, 1002 to 1024, and 1025 to 1054; these read LRRILLLQSWFRMVLERRHFV, KHAALTIQACWRSYRVRRTLE, RTRAAVYLQAAWRGYLQRQAYHH, and QRHSIIRLQSLCRGHLQRRSFSQMMLEKQK. Phosphoserine is present on Ser1046. Residues 1046–1980 form a tail region; it reads SQMMLEKQKA…ERAVRGAAEE (935 aa). Disordered regions lie at residues 1049–1281, 1302–1380, and 1394–1449; these read MLEK…HPDT, SQSL…QGDS, and DKKP…NRKV. Residues 1097-1106 show a composition bias toward polar residues; it reads TWMNSKSPNG. A phosphoserine mark is found at Ser1108, Ser1115, and Ser1177. 2 stretches are compositionally biased toward basic and acidic residues: residues 1129–1177 and 1186–1195; these read ESHE…RKAS and EDTKEPREDG. Residues Ser1220, Ser1222, Ser1229, Ser1237, Ser1243, and Ser1247 each carry the phosphoserine modification. Residues 1235–1247 show a composition bias toward low complexity; it reads RVSPVLPSSSLES. The span at 1250-1265 shows a compositional bias: basic and acidic residues; it reads DEDKGENSTKVQDKPE. Ser1266, Ser1268, and Ser1304 each carry phosphoserine. Thr1319 is subject to Phosphothreonine. Phosphoserine is present on residues Ser1327, Ser1329, and Ser1337. The segment covering 1327–1344 has biased composition (polar residues); it reads SFSTSDVSKLSPVKTSTE. The Phorbol-ester/DAG-type zinc-finger motif lies at 1592–1641; the sequence is GHVFASYQVNIPQSCEQCLSYIWLMDKALLCSVCKMTCHKKCVHKIQSYC. Ser1649 bears the Phosphoserine mark. The Rho-GAP domain maps to 1663-1848; sequence DSLTSDKASV…MLIKEQMRKY (186 aa). An interaction with RHOA region spans residues 1699 to 1704; sequence AANRTR. Residues 1841–1861 adopt a coiled-coil conformation; that stretch reads IKEQMRKYKVKMEEINHLEAA. Ser1886 bears the Phosphoserine mark. Residues 1891–1923 form a disordered region; it reads VRTKSPRTPVVQDLEELGALPEEAAGGDEDREK. Residues 1918–1948 are a coiled coil; sequence DEDREKEILMERIQSIKEEKEDITYRLPELD. Phosphoserine is present on residues Ser1932, Ser1952, and Ser1959. Over residues 1937–1953 the composition is skewed to basic and acidic residues; it reads KEDITYRLPELDPRGSD. The interval 1937-1980 is disordered; the sequence is KEDITYRLPELDPRGSDEENLDSETSASTESLLEERAVRGAAEE. Thr1965 bears the Phosphothreonine mark. Basic and acidic residues predominate over residues 1969–1980; that stretch reads LEERAVRGAAEE.

The protein belongs to the TRAFAC class myosin-kinesin ATPase superfamily. Myosin family. In terms of assembly, interacts (via IQ domains) with CALM. Interacts with RHOA. Interacts (via Rho-GAP domain) with ROBO1; this inhibits the interaction with RHOA and the stimulation of RHOA GTPase activity, and thereby increases the levels of active RHOA. In terms of tissue distribution, expressed in testis, lung, thymus, brain, liver, spleen and heart muscle. Detected in lung, testis, spleen and liver, and at reduced level in different brain regions (at protein level).

It is found in the cytoplasm. The protein resides in the cell cortex. The protein localises to the perinuclear region. Its subcellular location is the cytoskeleton. Its function is as follows. Myosins are actin-based motor molecules with ATPase activity. Unconventional myosins serve in intracellular movements. Binds actin with high affinity both in the absence and presence of ATP and its mechanochemical activity is inhibited by calcium ions. Also acts as a GTPase activator for RHOA. Plays a role in the regulation of cell migration via its role as RHOA GTPase activator. This is regulated by its interaction with the SLIT2 receptor ROBO1; interaction with ROBO1 impairs interaction with RHOA and subsequent activation of RHOA GTPase activity, and thereby leads to increased levels of active, GTP-bound RHOA. This chain is Unconventional myosin-IXb (Myo9b), found in Rattus norvegicus (Rat).